Reading from the N-terminus, the 367-residue chain is 2-aminoethylphosphonate--pyruvate transaminase (367 aa).

An N6-(pyridoxal phosphate)lysine modification is found at Lys-193.

This sequence belongs to the class-V pyridoxal-phosphate-dependent aminotransferase family. PhnW subfamily. In terms of assembly, homodimer. It depends on pyridoxal 5'-phosphate as a cofactor.

The catalysed reaction is (2-aminoethyl)phosphonate + pyruvate = phosphonoacetaldehyde + L-alanine. Involved in phosphonate degradation. This Vibrio vulnificus (strain CMCP6) protein is 2-aminoethylphosphonate--pyruvate transaminase.